Here is a 678-residue protein sequence, read N- to C-terminus: Vacuolar protein sorting-associated protein 1 (678 aa).

The region spanning 24-311 (LIDLPQITVV…LMHHIRNTLP (288 aa)) is the Dynamin-type G domain. The G1 motif stretch occupies residues 34–41 (RSQSSGKS). GTP is bound at residue 34–41 (RSQSSGKS). Positions 60-62 (VTR) are G2 motif. Positions 71–96 (NRPSASGKNEETTTDSDGKDQNNSSE) are disordered. A compositionally biased stretch (basic and acidic residues) spans 78–90 (KNEETTTDSDGKD). The G3 motif stretch occupies residues 153-156 (DLPG). Residues 153 to 157 (DLPGL) and 222 to 225 (TKVD) contribute to the GTP site. Residues 222–225 (TKVD) are G4 motif. A G5 motif region spans residues 252-255 (INRG). One can recognise a GED domain in the interval 592–678 (TEVIKLLIMS…LQASEIVSNV (87 aa)).

This sequence belongs to the TRAFAC class dynamin-like GTPase superfamily. Dynamin/Fzo/YdjA family.

This chain is Vacuolar protein sorting-associated protein 1 (vps1), found in Schizosaccharomyces pombe (strain 972 / ATCC 24843) (Fission yeast).